A 456-amino-acid chain; its full sequence is Neurexin-3-beta (456 aa).

Residues 1–35 (MHLRIHARRNPPRRPAWTLGIWSLFWGCIVSSVWS) form the signal peptide. Over 36–381 (SSNVASSSSS…EVIRESSSTT (346 aa)) the chain is Extracellular. The tract at residues 41–63 (SSSSSPGSHSQHEHHFHGSKHHS) is disordered. Basic residues predominate over residues 52-63 (HEHHFHGSKHHS). One can recognise a Laminin G-like domain in the interval 82 to 282 (ATYIFGKSGG…NPNIKINGSV (201 aa)). The Ca(2+) site is built by D134 and I151. A glycan (N-linked (GlcNAc...) asparagine) is linked at N181. Ca(2+) is bound by residues I233 and N235. N-linked (GlcNAc...) asparagine glycans are attached at residues N279 and N323. Residues 316–340 (ATTTTRKNRSTASIQPTSDDLVSSA) are disordered. A compositionally biased stretch (polar residues) spans 325–340 (STASIQPTSDDLVSSA). O-linked (Xyl...) (heparan sulfate) serine glycosylation occurs at S339. The chain crosses the membrane as a helical span at residues 382-402 (GMVVGIVAAAALCILILLYAM). The Cytoplasmic portion of the chain corresponds to 403–456 (YKYRNRDEGSYQVDETRNYISNSAQSNGTLLKEKPPSSKGGHKKQKNKDKEYYV). Residues 424 to 456 (NSAQSNGTLLKEKPPSSKGGHKKQKNKDKEYYV) are disordered.

The protein belongs to the neurexin family. As to quaternary structure, weakly interacts with CBLN1 and CBLN2. Very weak binding, if any, to CBLN4. Specific isoforms bind neuroligins NLGN1, NLGN2 and NLGN3. Interacts with CLSTN3. In terms of processing, processed by alpha-secretase leading to the formation of an extracellular soluble protein as well as a C-terminal membrane-embedded fragment (CTF). Proteolysis of these CTFs by gamma-secretase releases intracellular domains (ICDs) and extracellular peptides. Post-translationally, O-glycosylated; contains heparan sulfate. Heparan sulfate attachment is required for synapse development by mediating interactions with neuroligins.

The protein resides in the presynaptic cell membrane. It localises to the secreted. Neuronal cell surface protein that may be involved in cell recognition and cell adhesion. May mediate intracellular signaling. Functions as part of a trans-synaptic complex by binding to cerebellins and postsynaptic GRID1. This interaction helps regulate the activity of NMDA and AMPA receptors at hippocampal synapses without affecting synapse formation. NRXN3B-CBLN2-GRID1 complex transduce presynaptic signals into postsynaptic AMPAR response. This chain is Neurexin-3-beta (NRXN3), found in Bos taurus (Bovine).